A 355-amino-acid polypeptide reads, in one-letter code: Peptide chain release factor 1 (355 aa).

Position 231 is an N5-methylglutamine (glutamine 231).

Belongs to the prokaryotic/mitochondrial release factor family. In terms of processing, methylated by PrmC. Methylation increases the termination efficiency of RF1.

The protein localises to the cytoplasm. Functionally, peptide chain release factor 1 directs the termination of translation in response to the peptide chain termination codons UAG and UAA. In Aliarcobacter butzleri (strain RM4018) (Arcobacter butzleri), this protein is Peptide chain release factor 1.